Reading from the N-terminus, the 70-residue chain is Cold shock-like protein CspG (70 aa).

The CSD domain occupies 7-67; the sequence is GLVKWFNADK…GQRGPAAANV (61 aa).

Its subcellular location is the cytoplasm. This is Cold shock-like protein CspG (cspG) from Escherichia coli O157:H7.